Consider the following 150-residue polypeptide: Ribosomal RNA large subunit methyltransferase H (150 aa).

Residues Ala100 and Leu118–Phe123 contribute to the S-adenosyl-L-methionine site.

The protein belongs to the RNA methyltransferase RlmH family. As to quaternary structure, homodimer.

It is found in the cytoplasm. It catalyses the reaction pseudouridine(1915) in 23S rRNA + S-adenosyl-L-methionine = N(3)-methylpseudouridine(1915) in 23S rRNA + S-adenosyl-L-homocysteine + H(+). Functionally, specifically methylates the pseudouridine at position 1915 (m3Psi1915) in 23S rRNA. This is Ribosomal RNA large subunit methyltransferase H from Helicobacter pylori (strain HPAG1).